Here is a 93-residue protein sequence, read N- to C-terminus: Putative defensin-like protein 190 (93 aa).

A signal peptide spans 1–30; sequence MKMAKAAATNDFGFITCLVIFLVLAGISNG. Disulfide bonds link Cys-39–Cys-89, Cys-55–Cys-75, Cys-60–Cys-84, and Cys-64–Cys-86.

This sequence belongs to the DEFL family.

The protein resides in the secreted. This Arabidopsis thaliana (Mouse-ear cress) protein is Putative defensin-like protein 190.